Here is a 328-residue protein sequence, read N- to C-terminus: MTATKQHKKVILVGDGAVGSSYAFALVNQGIAQELGIIEIPQLFEKAVGDAEDLSHALAFTSPKKIYAATYADCADADLVVITAGAPQKPGETRLDLVGKNLAINKSIVTQVVESGFNGIFLVAANPVDVLTYSTWKFSGFPKERVIGSGTSLDSARFRQALAEKIGIDARSVHAYIMGEHGDSEFAVWSHANVAGVKLEQWLQANRDLNEQDLVDLFISVRDAAYSIINKKGATYYGIAVALARITKAILDDENAVLPLSVFQEGQYGVENVFIGQPAIVGAHGIVRPVNIPLNDAETQKMQASAKELQAIIDEAWKNPEFQEASKN.

NAD(+)-binding positions include valine 18, glutamate 39, lysine 46, tyrosine 71, and 85–86; that span reads GA. Substrate-binding residues include glutamine 88 and arginine 94. Residues serine 107, 124–126, and serine 149 each bind NAD(+); that span reads AAN. 126–129 lines the substrate pocket; sequence NPVD. Substrate is bound at residue 154–157; that stretch reads DSAR. Beta-D-fructose 1,6-bisphosphate-binding residues include arginine 159 and histidine 174. The active-site Proton acceptor is the histidine 181. Tyrosine 226 bears the Phosphotyrosine mark. Substrate is bound at residue threonine 235.

The protein belongs to the LDH/MDH superfamily. LDH family. As to quaternary structure, homotetramer.

Its subcellular location is the cytoplasm. The enzyme catalyses (S)-lactate + NAD(+) = pyruvate + NADH + H(+). The protein operates within fermentation; pyruvate fermentation to lactate; (S)-lactate from pyruvate: step 1/1. With respect to regulation, allosterically activated by fructose 1,6-bisphosphate (FBP). Catalyzes the conversion of lactate to pyruvate. The polypeptide is L-lactate dehydrogenase (Streptococcus sanguinis (strain SK36)).